A 334-amino-acid chain; its full sequence is Small ribosomal subunit protein uS2 (334 aa).

The protein belongs to the universal ribosomal protein uS2 family.

In Rhodopseudomonas palustris (strain BisB18), this protein is Small ribosomal subunit protein uS2.